Here is a 299-residue protein sequence, read N- to C-terminus: ATP phosphoribosyltransferase (299 aa).

The protein belongs to the ATP phosphoribosyltransferase family. Long subfamily. The cofactor is Mg(2+).

The protein localises to the cytoplasm. It catalyses the reaction 1-(5-phospho-beta-D-ribosyl)-ATP + diphosphate = 5-phospho-alpha-D-ribose 1-diphosphate + ATP. The protein operates within amino-acid biosynthesis; L-histidine biosynthesis; L-histidine from 5-phospho-alpha-D-ribose 1-diphosphate: step 1/9. Its activity is regulated as follows. Feedback inhibited by histidine. Functionally, catalyzes the condensation of ATP and 5-phosphoribose 1-diphosphate to form N'-(5'-phosphoribosyl)-ATP (PR-ATP). Has a crucial role in the pathway because the rate of histidine biosynthesis seems to be controlled primarily by regulation of HisG enzymatic activity. The polypeptide is ATP phosphoribosyltransferase (Shewanella loihica (strain ATCC BAA-1088 / PV-4)).